Reading from the N-terminus, the 400-residue chain is NADPH dehydrogenase 3 (400 aa).

Residues Thr-38 and Gln-115 each contribute to the FMN site. His-192 and Asn-195 together coordinate substrate. Catalysis depends on Tyr-197, which acts as the Proton donor. FMN-binding residues include Arg-244 and Arg-349. A substrate-binding site is contributed by Tyr-376.

In terms of assembly, homodimer or heterodimer with OYE2. FMN serves as cofactor.

The enzyme catalyses A + NADPH + H(+) = AH2 + NADP(+). Functionally, flavin-dependent enoate reductase that catalyzes the chemo- and stereoslective hydrogenation of electron-poor alkenes. The enzyme is reduced by NADPH, and oxygen, quinones, and alpha,beta-unsaturated aldehydes and ketones can act as electron acceptors to complete catalytic turnover. The physiological oxidant remains elusive. Has a prooxidant activity, increasing reactive oxygen species (ROS) levels when overexpressed. Formation of OYE2-OYE3 heterodimers contribute to the induction of programmed cell death upon oxidative stress. This Saccharomyces cerevisiae (strain ATCC 204508 / S288c) (Baker's yeast) protein is NADPH dehydrogenase 3.